A 316-amino-acid polypeptide reads, in one-letter code: Protoheme IX farnesyltransferase (316 aa).

A disordered region spans residues 1-21 (MAKSQALGNAPLTSTVAENAT). Residues 11 to 21 (PLTSTVAENAT) show a composition bias toward polar residues. A run of 9 helical transmembrane segments spans residues 42–62 (VVAM…PGIP), 67–87 (VILG…FNHV), 115–135 (VVFA…LNAL), 136–156 (TAWL…VWLK), 163–183 (IVIG…AVTG), 189–209 (ALLL…ALAI), 235–255 (MVLL…LTGM), 256–276 (SGGV…GYAL), and 295–315 (IWHL…TSLM).

This sequence belongs to the UbiA prenyltransferase family. Protoheme IX farnesyltransferase subfamily.

It is found in the cell inner membrane. It carries out the reaction heme b + (2E,6E)-farnesyl diphosphate + H2O = Fe(II)-heme o + diphosphate. The protein operates within porphyrin-containing compound metabolism; heme O biosynthesis; heme O from protoheme: step 1/1. In terms of biological role, converts heme B (protoheme IX) to heme O by substitution of the vinyl group on carbon 2 of heme B porphyrin ring with a hydroxyethyl farnesyl side group. This chain is Protoheme IX farnesyltransferase, found in Photobacterium profundum (strain SS9).